The sequence spans 235 residues: Heme oxygenase (235 aa).

H19 contacts heme b.

The protein belongs to the heme oxygenase family.

It is found in the plastid. It localises to the chloroplast. It carries out the reaction heme b + 3 reduced [NADPH--hemoprotein reductase] + 3 O2 = biliverdin IXalpha + CO + Fe(2+) + 3 oxidized [NADPH--hemoprotein reductase] + 3 H2O + H(+). Functionally, catalyzes the opening of the heme ring with the release of iron. Key enzyme in the synthesis of the chromophoric part of the photosynthetic antennae. This chain is Heme oxygenase (pbsA), found in Rhodella violacea (Red alga).